Here is an 89-residue protein sequence, read N- to C-terminus: Large ribosomal subunit protein bL28 (89 aa).

This sequence belongs to the bacterial ribosomal protein bL28 family.

This Chlamydia trachomatis serovar L2 (strain ATCC VR-902B / DSM 19102 / 434/Bu) protein is Large ribosomal subunit protein bL28.